The following is a 355-amino-acid chain: UDP-3-O-acylglucosamine N-acyltransferase (355 aa).

The active-site Proton acceptor is the His-252.

This sequence belongs to the transferase hexapeptide repeat family. LpxD subfamily. Homotrimer.

It carries out the reaction a UDP-3-O-[(3R)-3-hydroxyacyl]-alpha-D-glucosamine + a (3R)-hydroxyacyl-[ACP] = a UDP-2-N,3-O-bis[(3R)-3-hydroxyacyl]-alpha-D-glucosamine + holo-[ACP] + H(+). Its pathway is bacterial outer membrane biogenesis; LPS lipid A biosynthesis. In terms of biological role, catalyzes the N-acylation of UDP-3-O-acylglucosamine using 3-hydroxyacyl-ACP as the acyl donor. Is involved in the biosynthesis of lipid A, a phosphorylated glycolipid that anchors the lipopolysaccharide to the outer membrane of the cell. The chain is UDP-3-O-acylglucosamine N-acyltransferase from Polynucleobacter asymbioticus (strain DSM 18221 / CIP 109841 / QLW-P1DMWA-1) (Polynucleobacter necessarius subsp. asymbioticus).